The sequence spans 267 residues: Ribosomal RNA small subunit methyltransferase A (267 aa).

Residues asparagine 18, leucine 20, glycine 45, glutamate 66, aspartate 91, and asparagine 112 each contribute to the S-adenosyl-L-methionine site.

Belongs to the class I-like SAM-binding methyltransferase superfamily. rRNA adenine N(6)-methyltransferase family. RsmA subfamily.

It is found in the cytoplasm. The catalysed reaction is adenosine(1518)/adenosine(1519) in 16S rRNA + 4 S-adenosyl-L-methionine = N(6)-dimethyladenosine(1518)/N(6)-dimethyladenosine(1519) in 16S rRNA + 4 S-adenosyl-L-homocysteine + 4 H(+). Specifically dimethylates two adjacent adenosines (A1518 and A1519) in the loop of a conserved hairpin near the 3'-end of 16S rRNA in the 30S particle. May play a critical role in biogenesis of 30S subunits. The chain is Ribosomal RNA small subunit methyltransferase A from Shewanella denitrificans (strain OS217 / ATCC BAA-1090 / DSM 15013).